The sequence spans 158 residues: Cytochrome b562 (158 aa).

The next 4 helical transmembrane spans lie at 12–32, 46–66, 87–107, and 121–141; these read ITLH…GETM, AGVG…LTLV, VAAG…ALGM, and HVLA…SALF. Heme b is bound by residues H15 and H53. Residues H121 and H135 each contribute to the heme b site.

This sequence belongs to the cytochrome b561 family. Homodimer. Heme b serves as cofactor.

The protein resides in the cell membrane. Its function is as follows. Cytochrome b562 is an integral component of the cytochrome b-c1 complex in the cyclic electron transfer system of photosynthetic bacteria. The protein is Cytochrome b562 of Cereibacter sphaeroides (strain ATCC 17023 / DSM 158 / JCM 6121 / CCUG 31486 / LMG 2827 / NBRC 12203 / NCIMB 8253 / ATH 2.4.1.) (Rhodobacter sphaeroides).